The following is a 659-amino-acid chain: Cysteine-rich receptor-like protein kinase 18 (659 aa).

A signal peptide spans Met1 to Ala27. Gnk2-homologous domains lie at Gln28 to Phe131 and Met137 to Phe250. The Extracellular segment spans residues Gln28–Lys287. Residues Asn32, Asn57, Asn152, Asn162, Asn179, Asn180, Asn197, Asn275, and Asn279 are each glycosylated (N-linked (GlcNAc...) asparagine). The chain crosses the membrane as a helical span at residues Ile288–Ile308. Topologically, residues Ser309–Arg659 are cytoplasmic. A Protein kinase domain is found at Phe339–Leu611. ATP contacts are provided by residues Leu345–Val353 and Lys367. The residue at position 412 (Tyr412) is a Phosphotyrosine. The active-site Proton acceptor is Asp464. The residue at position 468 (Ser468) is a Phosphoserine. Thr504 carries the phosphothreonine modification. The residue at position 512 (Tyr512) is a Phosphotyrosine.

It belongs to the protein kinase superfamily. Ser/Thr protein kinase family. CRK subfamily.

It is found in the membrane. The catalysed reaction is L-seryl-[protein] + ATP = O-phospho-L-seryl-[protein] + ADP + H(+). It catalyses the reaction L-threonyl-[protein] + ATP = O-phospho-L-threonyl-[protein] + ADP + H(+). In Arabidopsis thaliana (Mouse-ear cress), this protein is Cysteine-rich receptor-like protein kinase 18 (CRK18).